The sequence spans 82 residues: Small ribosomal subunit protein bS18 (82 aa).

This sequence belongs to the bacterial ribosomal protein bS18 family. In terms of assembly, part of the 30S ribosomal subunit. Forms a tight heterodimer with protein bS6.

Functionally, binds as a heterodimer with protein bS6 to the central domain of the 16S rRNA, where it helps stabilize the platform of the 30S subunit. The protein is Small ribosomal subunit protein bS18 of Sinorhizobium fredii (strain NBRC 101917 / NGR234).